The chain runs to 21 residues: Nitrilase (21 aa).

This sequence belongs to the carbon-nitrogen hydrolase superfamily. Nitrilase family.

It carries out the reaction a nitrile + 2 H2O = a carboxylate + NH4(+). Its function is as follows. Acts on many kinds of nitrile compounds such as aliphatic, aromatic, and heterocyclic mononitriles or dinitriles. Prefers S-(-)-2-(4'-isobutylphenyl)-propionitrile to R-(+)-2-(4'-isobutylphenyl)-propionitrile as the substrate. The sequence is that of Nitrilase from Acinetobacter sp. (strain AK226).